The chain runs to 430 residues: Mucorpepsin (430 aa).

Positions 1-22 are cleaved as a signal peptide; that stretch reads MLFSQITSAILLTAASLSLTTA. A propeptide spans 23–69 (activation peptide); it reads RPVSKQSESKDKLLALPLTSVSRKFSQTKFGQQQLAEKLAGLKPFSE. A Peptidase A1 domain is found at 89–421; it reads YAIPVSIGTP…DFGNNRIGFA (333 aa). The active site involves aspartate 107. A disulfide bond links cysteine 120 and cysteine 126. N-linked (GlcNAc...) asparagine glycosylation is found at asparagine 148 and asparagine 257. The active site involves aspartate 306. Residues cysteine 341 and cysteine 385 are joined by a disulfide bond.

This sequence belongs to the peptidase A1 family.

The enzyme catalyses Hydrolysis of proteins, favoring hydrophobic residues at P1 and P1'. Clots milk. Does not accept Lys at P1, and hence does not activate trypsinogen.. In terms of biological role, this enzyme, capable of clotting milk is frequently used for cheese production. The chain is Mucorpepsin from Rhizomucor miehei.